A 451-amino-acid polypeptide reads, in one-letter code: Uronate isomerase (451 aa).

This sequence belongs to the metallo-dependent hydrolases superfamily. Uronate isomerase family.

It catalyses the reaction D-glucuronate = D-fructuronate. The catalysed reaction is aldehydo-D-galacturonate = keto-D-tagaturonate. It functions in the pathway carbohydrate metabolism; pentose and glucuronate interconversion. This chain is Uronate isomerase, found in Thermotoga sp. (strain RQ2).